The sequence spans 380 residues: MLIVADENIPLLDAFFQGFGEIRRVPGRSLDRATVEQADVLLVRSVTNVNRALLEGSKVRFVGTCTIGTDHLDLDYFKQAGIQWSSAPGCNARGVVDYVLGSLQTLAEIEGADLNQRTYGVVGAGEVGGRLVKVLKGLGWNVLVCDPPRQIAEDGDYVSLAQIIEQCDVISLHTPLTKSGNGSTWHLFDRQRLEQLKPGTWLINASRGPVVDNAALREVLLAREDLQAVLDVWEGEPEVDVDLADLCVLATPHIAGYSLEGRQRGTAQIYQAFCAHLGQAPSILLSDLLPPPWLAEVHLNASTDPAWALATLCRSVYDPRRDDADFRRSLVGTVEEQRKAFDLLRKHYPARREIEGLKVRINGESTALASIVSALGAQAI.

Substrate-binding residues include serine 45 and threonine 66. NAD(+) contacts are provided by residues aspartate 146, threonine 174, 205–207, and aspartate 231; that span reads ASR. Residue arginine 207 is part of the active site. The active site involves glutamate 236. Histidine 253 functions as the Proton donor in the catalytic mechanism. Glycine 256 serves as a coordination point for NAD(+). Tyrosine 257 contacts substrate.

This sequence belongs to the D-isomer specific 2-hydroxyacid dehydrogenase family. PdxB subfamily. As to quaternary structure, homodimer.

The protein localises to the cytoplasm. The enzyme catalyses 4-phospho-D-erythronate + NAD(+) = (R)-3-hydroxy-2-oxo-4-phosphooxybutanoate + NADH + H(+). The protein operates within cofactor biosynthesis; pyridoxine 5'-phosphate biosynthesis; pyridoxine 5'-phosphate from D-erythrose 4-phosphate: step 2/5. Catalyzes the oxidation of erythronate-4-phosphate to 3-hydroxy-2-oxo-4-phosphonooxybutanoate. The polypeptide is Erythronate-4-phosphate dehydrogenase (Pseudomonas fluorescens (strain SBW25)).